A 47-amino-acid chain; its full sequence is Laccase-2d (47 aa).

A Plastocyanin-like domain is found at 2-47; that stretch reads TGPVADLHIINKDLSPDGFQRPTVVAGGGRDVVSIGRAGDNVTIRF.

The protein belongs to the multicopper oxidase family. Homodimer. The cofactor is Cu cation. Post-translationally, N-glycosylated; contains 17% carbohydrates.

It localises to the secreted. The catalysed reaction is 4 hydroquinone + O2 = 4 benzosemiquinone + 2 H2O. Its activity is regulated as follows. Inhibited by sodium azide, SDS and mercaptoethanol, but not by 4-hexyl resocinol, L-cysteine and dithiothreitol. Activity is inhibited by the heavy metal ions Cr, W, Sn, Ag(+) and Hg(2+), but not by Pb(2+), Fe(3+), Ni(2+), Li(2+), Co(2+) or Cd(2+). Lignin degradation and detoxification of lignin-derived products. Has highest activity towards ABTS, also active towards ferulic acid and guaiacol, but is not active towards tyrosine, vanillic acid, 2,5-dimethyl aniline, p-anisidine or violuric acid. The polypeptide is Laccase-2d (Cerrena unicolor (Canker rot fungus)).